The sequence spans 402 residues: MISGEQAKPLLITNVKPVAFGVEHSDATTDILVGKDGSISAIGKSLNAPADVERVDGKGAWISPGWVDLHVHIWHGGTDISIRPSECGAERGVTTLVDAGSAGEANFHGFREYIIEPSKERIKAFLNLGSIGLVACNRVPELRDIKDIDLDRILECYAANSEHIVGIKVRASHVITGSWGVTPVKLGKKIAKILKVPMMVHVGEPPALYDEVLEILGPGDVVTHCFNGKSGSSIMEDEDLFNLAERCSGEGIRLDIGHGGASFSFKVAEAAIERGLLPFSISTDLHGHSMNFPVWDLATTMSKLLSVNMPFENVIEAVTHNPASVIKLSMENRLSVGQRADFTIFDLVDADLEATDSNGDVSRLNRLFEPRYAVIGAEAITASRYIPRARKLVRHSHGYSWR.

Residues His-70, His-72, Lys-168, His-201, His-224, and Asp-284 each contribute to the Zn(2+) site. An N6-carboxylysine modification is found at Lys-168.

This sequence belongs to the metallo-dependent hydrolases superfamily. Atu3266/EF_0837 deacetylase family. It depends on Zn(2+) as a cofactor.

Functionally, esterase that catalyzes the deacetylation of acetyl-(R)-mandelate (in vitro). Can also hydrolyze acetyl glycolate, but with lower efficiency. Has very low N-acetyl-D-amino acid deacetylase activity with N-acetyl-D-serine and N-acetyl-D-threonine (in vitro). Theoretical substrate docking studies suggest that other N-acetylated amino acids may optimally occupy the active site and may in fact be the physiological substrates. The sequence is that of Deacetylase Oant_2987 from Brucella anthropi (strain ATCC 49188 / DSM 6882 / CCUG 24695 / JCM 21032 / LMG 3331 / NBRC 15819 / NCTC 12168 / Alc 37) (Ochrobactrum anthropi).